The primary structure comprises 142 residues: Large ribosomal subunit protein uL13 (142 aa).

This sequence belongs to the universal ribosomal protein uL13 family. Part of the 50S ribosomal subunit.

Its function is as follows. This protein is one of the early assembly proteins of the 50S ribosomal subunit, although it is not seen to bind rRNA by itself. It is important during the early stages of 50S assembly. This Opitutus terrae (strain DSM 11246 / JCM 15787 / PB90-1) protein is Large ribosomal subunit protein uL13.